We begin with the raw amino-acid sequence, 317 residues long: Phospho-N-acetylmuramoyl-pentapeptide-transferase (317 aa).

The next 9 membrane-spanning stretches (helical) occupy residues 4–24 (LIYSVLIAFFIAMLEGPILIP), 49–69 (TPTMGGIIFILATFITMAVIV), 76–96 (AMIALYAFIGFGIIGAIDDTL), 112–132 (MILLLAISGIFAYYSANNPYI), 147–167 (LGVFYIPFIIVYFAATTNAVN), 186–206 (FLALVSFAMGHITLAVFCAIL), 223–243 (IFMGDTGSLALGGAIGAVAMI), 246–266 (LPLLVIIIGGIYVLEALSVIF), and 297–317 (RVVSVFCIVTVILCLVGFLSL).

Belongs to the glycosyltransferase 4 family. MraY subfamily. It depends on Mg(2+) as a cofactor.

Its subcellular location is the cell membrane. The catalysed reaction is UDP-N-acetyl-alpha-D-muramoyl-L-alanyl-gamma-D-glutamyl-meso-2,6-diaminopimeloyl-D-alanyl-D-alanine + di-trans,octa-cis-undecaprenyl phosphate = di-trans,octa-cis-undecaprenyl diphospho-N-acetyl-alpha-D-muramoyl-L-alanyl-D-glutamyl-meso-2,6-diaminopimeloyl-D-alanyl-D-alanine + UMP. The protein operates within cell wall biogenesis; peptidoglycan biosynthesis. In terms of biological role, catalyzes the initial step of the lipid cycle reactions in the biosynthesis of the cell wall peptidoglycan: transfers peptidoglycan precursor phospho-MurNAc-pentapeptide from UDP-MurNAc-pentapeptide onto the lipid carrier undecaprenyl phosphate, yielding undecaprenyl-pyrophosphoryl-MurNAc-pentapeptide, known as lipid I. In Clostridium kluyveri (strain NBRC 12016), this protein is Phospho-N-acetylmuramoyl-pentapeptide-transferase.